The following is a 520-amino-acid chain: Anthranilate synthase component 1 (520 aa).

Residues Ser-40, Lys-50, and 291–293 (PYM) each bind L-tryptophan. A chorismate-binding site is contributed by 328–329 (GT). Glu-361 is a binding site for Mg(2+). Chorismate-binding positions include Tyr-449, Arg-469, 483–485 (GAG), and Gly-485. Glu-498 provides a ligand contact to Mg(2+).

This sequence belongs to the anthranilate synthase component I family. In terms of assembly, homodimer. In fact, exists in a monomer-dimer equilibrium in solution, shifted spontaneously in favor of the dimer; the monomer has a reduced activity compared with the dimer. Heterotetramer consisting of two non-identical subunits: a beta subunit (TrpG) and a large alpha subunit (TrpE) (Potential). Mg(2+) is required as a cofactor.

The catalysed reaction is chorismate + L-glutamine = anthranilate + pyruvate + L-glutamate + H(+). The protein operates within amino-acid biosynthesis; L-tryptophan biosynthesis; L-tryptophan from chorismate: step 1/5. Its activity is regulated as follows. Cooperatively feedback inhibited by tryptophan. In terms of biological role, part of a heterotetrameric complex that catalyzes the two-step biosynthesis of anthranilate, an intermediate in the biosynthesis of L-tryptophan. In the first step, the glutamine-binding beta subunit (TrpG) of anthranilate synthase (AS) provides the glutamine amidotransferase activity which generates ammonia as a substrate that, along with chorismate, is used in the second step, catalyzed by the large alpha subunit of AS (TrpE) to produce anthranilate. In the absence of TrpG, TrpE can synthesize anthranilate directly from chorismate and high concentrations of ammonia. The chain is Anthranilate synthase component 1 (trpE) from Salmonella typhimurium (strain LT2 / SGSC1412 / ATCC 700720).